The following is an 867-amino-acid chain: uncharacterized protein (867 aa).

One can recognise an SPX domain in the interval 1-294 (MKFSHSLQFN…GSSLRESYMK (294 aa)). 2 disordered regions span residues 105 to 152 (QGNN…GQTS) and 165 to 228 (ESTA…NNNR). The span at 138 to 152 (ITSSNREIYLNGQTS) shows a compositional bias: polar residues. A compositionally biased stretch (acidic residues) spans 198 to 223 (GNDDEVEEEDDDDDDEDEDEDEDEDN). Transmembrane regions (helical) follow at residues 406 to 426 (TIATLITIIVIFILLLSFPVI), 434 to 454 (CLALLVMVSLLWATEAIPLFV), 485 to 505 (VIFSSMWNPTIVLLLGGFTIA), 537 to 557 (MFVAMFASMWISNVAAPVLCF), 576 to 596 (ILIVGIALASNVGGIASPISS), 616 to 636 (FAVSIPVSLLCIFSIWFLLSF), 656 to 676 (FTGVQWFISIVTIGTIVLWCL), 683 to 703 (VFGDMGVIALVPIIVFFGTGL), 712 to 732 (FLWTVIVLAMGGVALGKVVSS), 755 to 775 (VLLIFSALTLVVSSFISHIVA), 797 to 817 (LFVLASGMMCSLAMALPTSGF), and 842 to 862 (AGIPATLISFVILLLIGTPIM).

The protein belongs to the CitM (TC 2.A.11) transporter family.

It localises to the endoplasmic reticulum membrane. This is an uncharacterized protein from Schizosaccharomyces pombe (strain 972 / ATCC 24843) (Fission yeast).